A 141-amino-acid polypeptide reads, in one-letter code: Hemoglobin subunit alpha-1 (141 aa).

A Globin domain is found at 1–141 (VLTDAEKKEV…VATVLTSKYR (141 aa)). Histidine 58 contacts O2. Histidine 87 is a binding site for heme b.

Belongs to the globin family. Heterotetramer of two alpha chains and two beta chains. In terms of tissue distribution, red blood cells.

Involved in oxygen transport from the lung to the various peripheral tissues. The chain is Hemoglobin subunit alpha-1 from Tachyglossus aculeatus aculeatus (Southeast Australian short-beaked echidna).